A 250-amino-acid polypeptide reads, in one-letter code: Functional amyloid subunit FapC (250 aa).

Residues 1–24 (MKPTMALKPLVFALAALMAVAAQA) form the signal peptide. Residues 62-95 (NNAGANGSLSNSKGNLGANIAAGSGNQQDNAAAI) form a FapC_R1 repeat. The tract at residues 96–126 (TSSAGDAATVFAVADIYQESKDNKFTNKGTQ) is linker 1. One copy of the FapC_R2 repeat lies at 127 to 160 (NNALLNNSANNSSGNVGVNVAAGQGNQQKNNLAI). Residues 161–199 (VTADGKNVAAASNTEQVSLDNHFLNEASSKHSYKPQYVV) are linker 2. A FapC_R3 repeat occupies 200 to 233 (NNAGLLNSANNASGNIGVNVAAGAGNQQSNTLTL). The Cys-X-X-Cys signature appears at 237–240 (CTVC).

Belongs to the FapB/FapC family. The major component of purified amyloid fibrils. Forms fibrils in vitro; in the presence of FapA the fibrils are about 50% wider. Interacts with FapA. Fibrillates in vitro; this is inhibited by FapA. Fibrils are resistant to boiling in 2% (weight/vol) SDS and require &gt;90% (vol/vol) formic acid to dissolve.

It is found in the fimbrium. The protein localises to the secreted. The major functional amyloid subunit in this bacterium. Intrinsically disordered in its monomeric state. Upon overexpression of the endogenous six-gene locus (fapA-fapF) in situ, cells form large clumps during liquid growth, make large amounts of biofilm and produce amyloid fibrils. Expression of the 6 gene operon in E.coli strain BL21(DE3) induces flocculation and biofilm formation with copious extracellular fibrils. In Pseudomonas fluorescens, this protein is Functional amyloid subunit FapC.